Consider the following 314-residue polypeptide: Malate dehydrogenase (314 aa).

NAD(+) is bound by residues 11 to 16 (GSGNIG) and Asp35. Substrate is bound by residues Arg84 and Arg90. NAD(+) contacts are provided by residues Asn97 and 120–122 (ITN). Positions 122 and 153 each coordinate substrate. Residue His177 is the Proton acceptor of the active site.

Belongs to the LDH/MDH superfamily. MDH type 3 family.

The catalysed reaction is (S)-malate + NAD(+) = oxaloacetate + NADH + H(+). In terms of biological role, catalyzes the reversible oxidation of malate to oxaloacetate. The protein is Malate dehydrogenase of Rickettsia bellii (strain OSU 85-389).